The following is a 147-amino-acid chain: Hemoglobin subunit beta-1 (147 aa).

In terms of domain architecture, Globin spans 3-147 (EWTAAERRHV…VVSALGRQYH (145 aa)). Heme b-binding residues include H64 and H93.

Belongs to the globin family. As to quaternary structure, hb 1 is a heterotetramer of two alpha-1 and two beta-1 chains. Red blood cells.

Involved in oxygen transport from gills to the various peripheral tissues. The sequence is that of Hemoglobin subunit beta-1 (hbb1) from Gadus morhua (Atlantic cod).